The following is a 2157-amino-acid chain: Genome polyprotein (2157 aa).

Residue Gly2 is the site of N-myristoyl glycine; by host attachment. At 2–1470 the chain is on the cytoplasmic side; the sequence is GAQVSRQNVG…DLSIANSIIT (1469 aa). Residues 567-584 are amphipathic alpha-helix; that stretch reads PIEQNPVENYIDEVLNEV. Residues His875 and Asp892 each act as for protease 2A activity in the active site. The Zn(2+) site is built by Cys909 and Cys911. Cys963 serves as the catalytic For protease 2A activity. Zn(2+) is bound by residues Cys969 and His971. The membrane-binding stretch occupies residues 1095–1164; sequence SDSWLKKFTE…NLRAADNATQ (70 aa). An oligomerization region spans residues 1095-1228; that stretch reads SDSWLKKFTE…PPGTGKSITT (134 aa). The interval 1116-1120 is RNA-binding; that stretch reads GNKIS. The SF3 helicase domain occupies 1188–1350; it reads EAKRIKVLYN…YKDAQGKLNV (163 aa). The Zn(2+) site is built by Cys1357, Cys1368, and Cys1373. The segment at 1357 to 1373 adopts a C4-type; degenerate zinc-finger fold; the sequence is CNVNTKIGNAKCCPFVC. The tract at residues 1400 to 1407 is RNA-binding; the sequence is EDKRRRQV. Residues 1411-1416 form an oligomerization region; the sequence is MSAIFQ. An intramembrane segment occupies 1471-1486; sequence IIANIISIAGIIFVIY. Over 1487-2157 the chain is Cytoplasmic; it reads KLFCTLQGPY…LLKHEWYEKF (671 aa). Residue Tyr1496 is modified to O-(5'-phospho-RNA)-tyrosine. One can recognise a Peptidase C3 domain in the interval 1515-1693; that stretch reads GPEEEFGRSI…FSAMLLRSYF (179 aa). Active-site for protease 3C activity residues include His1554, Glu1585, and Cys1661. Residues 1925–2038 enclose the RdRp catalytic domain; that stretch reads DCIMAFDYTN…SYKYTLDMEA (114 aa). The Mg(2+) site is built by Asp1931 and Asp2024.

The protein belongs to the picornaviruses polyprotein family. Interacts with capsid protein VP1 and capsid protein VP3 to form heterotrimeric protomers. In terms of assembly, interacts with capsid protein VP0, and capsid protein VP3 to form heterotrimeric protomers. Five protomers subsequently associate to form pentamers which serve as building blocks for the capsid. Interacts with capsid protein VP2, capsid protein VP3 and capsid protein VP4 following cleavage of capsid protein VP0. As to quaternary structure, interacts with capsid protein VP1 and capsid protein VP3 in the mature capsid. Interacts with capsid protein VP0 and capsid protein VP1 to form heterotrimeric protomers. Five protomers subsequently associate to form pentamers which serve as building blocks for the capsid. Interacts with capsid protein VP4 in the mature capsid. Interacts with protein 2C; this interaction may be important for virion morphogenesis. In terms of assembly, interacts with capsid protein VP1 and capsid protein VP3. As to quaternary structure, homodimer. Homohexamer; forms a hexameric ring structure with 6-fold symmetry characteristic of AAA+ ATPases. Interacts (via N-terminus) with host RTN3 (via reticulon domain); this interaction is important for viral replication. Interacts with capsid protein VP3; this interaction may be important for virion morphogenesis. In terms of assembly, interacts with protein 3CD. As to quaternary structure, homodimer. Interacts with host GBF1. Interacts (via GOLD domain) with host ACBD3 (via GOLD domain); this interaction allows the formation of a viral protein 3A/ACBD3 heterotetramer with a 2:2 stoichiometry, which will stimulate the recruitment of host PI4KB in order to synthesize PI4P at the viral RNA replication sites. Interacts with RNA-directed RNA polymerase. In terms of assembly, interacts with protein 3AB and with RNA-directed RNA polymerase. As to quaternary structure, interacts with Viral protein genome-linked and with protein 3CD. Mg(2+) is required as a cofactor. Specific enzymatic cleavages in vivo by the viral proteases yield processing intermediates and the mature proteins. Post-translationally, myristoylation is required for the formation of pentamers during virus assembly. Further assembly of 12 pentamers and a molecule of genomic RNA generates the provirion. In terms of processing, during virion maturation, immature virions are rendered infectious following cleavage of VP0 into VP4 and VP2. This maturation seems to be an autocatalytic event triggered by the presence of RNA in the capsid and it is followed by a conformational change infectious virion. Myristoylation is required during RNA encapsidation and formation of the mature virus particle. Post-translationally, VPg is uridylylated by the polymerase into VPg-pUpU. This acts as a nucleotide-peptide primer for the genomic RNA replication.

The protein localises to the virion. Its subcellular location is the host cytoplasm. It is found in the host cytoplasmic vesicle membrane. It localises to the host nucleus. It catalyses the reaction a ribonucleoside 5'-triphosphate + H2O = a ribonucleoside 5'-diphosphate + phosphate + H(+). The enzyme catalyses Selective cleavage of Tyr-|-Gly bond in the picornavirus polyprotein.. The catalysed reaction is RNA(n) + a ribonucleoside 5'-triphosphate = RNA(n+1) + diphosphate. It carries out the reaction Selective cleavage of Gln-|-Gly bond in the poliovirus polyprotein. In other picornavirus reactions Glu may be substituted for Gln, and Ser or Thr for Gly.. With respect to regulation, replication or transcription is subject to high level of random mutations by the nucleotide analog ribavirin. In terms of biological role, forms an icosahedral capsid of pseudo T=3 symmetry with capsid proteins VP2 and VP3. The capsid is 300 Angstroms in diameter, composed of 60 copies of each capsid protein and enclosing the viral positive strand RNA genome. Capsid protein VP1 mainly forms the vertices of the capsid. Capsid protein VP1 interacts with host cell receptor to provide virion attachment to target host cells. This attachment induces virion internalization. Tyrosine kinases are probably involved in the entry process. After binding to its receptor, the capsid undergoes conformational changes. Capsid protein VP1 N-terminus (that contains an amphipathic alpha-helix) and capsid protein VP4 are externalized. Together, they shape a pore in the host membrane through which viral genome is translocated to host cell cytoplasm. Functionally, forms an icosahedral capsid of pseudo T=3 symmetry with capsid proteins VP2 and VP3. The capsid is 300 Angstroms in diameter, composed of 60 copies of each capsid protein and enclosing the viral positive strand RNA genome. Its function is as follows. Lies on the inner surface of the capsid shell. After binding to the host receptor, the capsid undergoes conformational changes. Capsid protein VP4 is released, Capsid protein VP1 N-terminus is externalized, and together, they shape a pore in the host membrane through which the viral genome is translocated into the host cell cytoplasm. Component of immature procapsids, which is cleaved into capsid proteins VP4 and VP2 after maturation. Allows the capsid to remain inactive before the maturation step. In terms of biological role, cysteine protease that cleaves viral polyprotein and specific host proteins. It is responsible for the autocatalytic cleavage between the P1 and P2 regions, which is the first cleavage occurring in the polyprotein. Also cleaves the host translation initiation factor EIF4G1, in order to shut down the capped cellular mRNA translation. Inhibits the host nucleus-cytoplasm protein and RNA trafficking by cleaving host members of the nuclear pores. Counteracts stress granule formation probably by antagonizing its assembly or promoting its dissassembly. Functionally, plays an essential role in the virus replication cycle by acting as a viroporin. Creates a pore in the host endoplasmic reticulum and as a consequence releases Ca2+ in the cytoplasm of infected cell. In turn, high levels of cytoplasmic calcium may trigger membrane trafficking and transport of viral ER-associated proteins to viroplasms, sites of viral genome replication. Its function is as follows. Induces and associates with structural rearrangements of intracellular membranes. Displays RNA-binding, nucleotide binding and NTPase activities. May play a role in virion morphogenesis and viral RNA encapsidation by interacting with the capsid protein VP3. Localizes the viral replication complex to the surface of membranous vesicles. Together with protein 3CD binds the Cis-Active RNA Element (CRE) which is involved in RNA synthesis initiation. Acts as a cofactor to stimulate the activity of 3D polymerase, maybe through a nucleid acid chaperone activity. In terms of biological role, localizes the viral replication complex to the surface of membranous vesicles. It inhibits host cell endoplasmic reticulum-to-Golgi apparatus transport and causes the disassembly of the Golgi complex, possibly through GBF1 interaction. This would result in depletion of MHC, trail receptors and IFN receptors at the host cell surface. Plays an essential role in viral RNA replication by recruiting ACBD3 and PI4KB at the viral replication sites, thereby allowing the formation of the rearranged membranous structures where viral replication takes place. Functionally, acts as a primer for viral RNA replication and remains covalently bound to viral genomic RNA. VPg is uridylylated prior to priming replication into VPg-pUpU. The oriI viral genomic sequence may act as a template for this. The VPg-pUpU is then used as primer on the genomic RNA poly(A) by the RNA-dependent RNA polymerase to replicate the viral genome. During genome replication, the VPg-RNA linkage is removed by the host TDP2, thereby accelerating replication. During the late stage of the replication cycle, host TDP2 is excluded from sites of viral RNA synthesis and encapsidation, allowing for the generation of progeny virions. Its function is as follows. Involved in the viral replication complex and viral polypeptide maturation. It exhibits protease activity with a specificity and catalytic efficiency that is different from protease 3C. Protein 3CD lacks polymerase activity. Protein 3CD binds to the 5'UTR of the viral genome. Replicates the viral genomic RNA on the surface of intracellular membranes. May form linear arrays of subunits that propagate along a strong head-to-tail interaction called interface-I. Covalently attaches UMP to a tyrosine of VPg, which is used to prime RNA synthesis. The positive stranded RNA genome is first replicated at virus induced membranous vesicles, creating a dsRNA genomic replication form. This dsRNA is then used as template to synthesize positive stranded RNA genomes. ss(+)RNA genomes are either translated, replicated or encapsidated. In terms of biological role, major viral protease that mediates proteolytic processing of the polyprotein. Cleaves host EIF5B, contributing to host translation shutoff. Also cleaves host PABPC1, contributing to host translation shutoff. Cleaves host NLRP1, triggers host N-glycine-mediated degradation of the autoinhibitory NLRP1 N-terminal fragment. This Homo sapiens (Human) protein is Genome polyprotein.